The chain runs to 220 residues: 3-dehydroquinate dehydratase (220 aa).

3-dehydroquinate contacts are provided by residues Ser-8, 30-32 (ELR), and Arg-63. His-114 (proton donor/acceptor) is an active-site residue. Residue Lys-140 is the Schiff-base intermediate with substrate of the active site. Arg-174 and Gln-197 together coordinate 3-dehydroquinate.

It belongs to the type-I 3-dehydroquinase family. In terms of assembly, homodimer.

The catalysed reaction is 3-dehydroquinate = 3-dehydroshikimate + H2O. The protein operates within metabolic intermediate biosynthesis; chorismate biosynthesis; chorismate from D-erythrose 4-phosphate and phosphoenolpyruvate: step 3/7. Functionally, involved in the third step of the chorismate pathway, which leads to the biosynthesis of aromatic amino acids. Catalyzes the cis-dehydration of 3-dehydroquinate (DHQ) and introduces the first double bond of the aromatic ring to yield 3-dehydroshikimate. The chain is 3-dehydroquinate dehydratase from Saccharolobus solfataricus (strain ATCC 35092 / DSM 1617 / JCM 11322 / P2) (Sulfolobus solfataricus).